A 206-amino-acid polypeptide reads, in one-letter code: MKLDVITLDAGKAGDIDLSDDIFGLEPRADLLHRVVRWQRAKAQAGTHSVLGKSDVSYSTKKIYRQKGTGGARHGSRKAPIFRHGGVYKGPTPRSHAFDLPKKVRALGLKHALSAKAAAGELVVVDSLNIAEAKTAAVAKAVKENGWKRVLVIDGAEVNENFARAARNLEGVDVLPSMGANVYDILRRDTLVLTRAGVEALEARLK.

It belongs to the universal ribosomal protein uL4 family. As to quaternary structure, part of the 50S ribosomal subunit.

Its function is as follows. One of the primary rRNA binding proteins, this protein initially binds near the 5'-end of the 23S rRNA. It is important during the early stages of 50S assembly. It makes multiple contacts with different domains of the 23S rRNA in the assembled 50S subunit and ribosome. Forms part of the polypeptide exit tunnel. This chain is Large ribosomal subunit protein uL4, found in Paracoccus denitrificans (strain Pd 1222).